A 179-amino-acid polypeptide reads, in one-letter code: ATP synthase subunit b (179 aa).

Residues 29-48 (VINLAILIGVLVYFGRGVLG) form a helical membrane-spanning segment.

Belongs to the ATPase B chain family. F-type ATPases have 2 components, F(1) - the catalytic core - and F(0) - the membrane proton channel. F(1) has five subunits: alpha(3), beta(3), gamma(1), delta(1), epsilon(1). F(0) has four main subunits: a(1), b(1), b'(1) and c(10-14). The alpha and beta chains form an alternating ring which encloses part of the gamma chain. F(1) is attached to F(0) by a central stalk formed by the gamma and epsilon chains, while a peripheral stalk is formed by the delta, b and b' chains.

It localises to the cellular thylakoid membrane. In terms of biological role, f(1)F(0) ATP synthase produces ATP from ADP in the presence of a proton or sodium gradient. F-type ATPases consist of two structural domains, F(1) containing the extramembraneous catalytic core and F(0) containing the membrane proton channel, linked together by a central stalk and a peripheral stalk. During catalysis, ATP synthesis in the catalytic domain of F(1) is coupled via a rotary mechanism of the central stalk subunits to proton translocation. Its function is as follows. Component of the F(0) channel, it forms part of the peripheral stalk, linking F(1) to F(0). Functionally, the complex from the organism is particularly stable to disruption and remains functional after 6 hrs at 55 degrees Celsius. This chain is ATP synthase subunit b, found in Thermosynechococcus vestitus (strain NIES-2133 / IAM M-273 / BP-1).